The following is a 370-amino-acid chain: GTPase Obg (370 aa).

The Obg domain occupies 1–159 (MKFIDEARIE…RMLKLELKVL (159 aa)). The disordered stretch occupies residues 128–147 (LHFKSSTNRAPRQKTDGKPG). Residues 160–334 (ADVGLLGMPN…LCYAIYDYLS (175 aa)) form the OBG-type G domain. Residues 166–173 (GMPNAGKS), 191–195 (FTTLA), 213–216 (DIPG), 284–287 (NKLD), and 315–317 (SAL) each bind GTP. Residues Ser173 and Thr193 each coordinate Mg(2+).

Belongs to the TRAFAC class OBG-HflX-like GTPase superfamily. OBG GTPase family. In terms of assembly, monomer. The cofactor is Mg(2+).

Its subcellular location is the cytoplasm. In terms of biological role, an essential GTPase which binds GTP, GDP and possibly (p)ppGpp with moderate affinity, with high nucleotide exchange rates and a fairly low GTP hydrolysis rate. Plays a role in control of the cell cycle, stress response, ribosome biogenesis and in those bacteria that undergo differentiation, in morphogenesis control. This Burkholderia cenocepacia (strain ATCC BAA-245 / DSM 16553 / LMG 16656 / NCTC 13227 / J2315 / CF5610) (Burkholderia cepacia (strain J2315)) protein is GTPase Obg.